Reading from the N-terminus, the 814-residue chain is Glycosyltransferase GlyD (814 aa).

Positions 1–264 (MNKTIVLAGD…SQILQHHMGE (264 aa)) are GT8 domain. Residues 8–13 (AGDRNY) and 102–103 (DS) each bind UDP. Mn(2+) contacts are provided by Asp-102, Asp-104, and His-226. A UDP-binding site is contributed by 226–232 (HFTTYRK). Positions 542-814 (EKPLDIIQVK…NSQIVARILN (273 aa)) are GT-D domain.

In the N-terminal section; belongs to the glycosyltransferase 8 family. This sequence in the C-terminal section; belongs to the GT-D family.

Its pathway is protein modification; protein glycosylation. In terms of biological role, involved in the polymorphic O-glycosylation of the serine-rich repeat protein PsrP. Catalyzes the third step in glycosylation PsrP in this bacteria. Transfers glucose from UDP-glucose to the terminal glucose moiety of already-glycosylated PsrP (using truncated substrates with PsrP SSR1-GlcNAc-Glc); the C-terminal GT-D domain is sufficient for this reaction in vitro. Also transfers galactose from UDP-galactose to the terminal glucose moiety of already-glycosylated PsrP; the C-terminal GT-D domain is also sufficient for this reaction in vitro. Activity is much higher with UDP-glucose, and the enzyme has a very marked preference for PsrP substrate that has already been modified by GlcNAc and glucose. In vitro has hydrolytic activity against UDP-galactose and to a lesser extent against UDP-glucose. Its function is as follows. Also catalyzes the fourth step in glycosylation of PsrP in this bacteria. Can transfer the sugar from both UDP-glucose and UDP-galactose to the terminal sugar moiety of PsrP-GlcNAc-Glc-Glc and PsrP-GlcNAc-Glc-Gal; the C-terminal GT-D domain is also sufficient for this reaction in vitro (using truncated substrates with glycosylated PsrP SSR1). The N-terminal GT-D domain can transfer galactose from UDP-galactose to PsrP-GlcNAc-Glc-Gal or PsrP-GlcNAc-Glc-Glc in the fourth step. The protein is Glycosyltransferase GlyD of Streptococcus pneumoniae serotype 4 (strain ATCC BAA-334 / TIGR4).